The sequence spans 799 residues: Mitochondrial intermediate peptidase (799 aa).

H562 contributes to the Zn(2+) binding site. The active site involves E563. Zn(2+)-binding residues include H566 and H569.

Belongs to the peptidase M3 family. The cofactor is Zn(2+).

Its subcellular location is the mitochondrion matrix. It carries out the reaction Release of an N-terminal octapeptide as second stage of processing of some proteins imported into the mitochondrion.. In terms of biological role, cleaves proteins, imported into the mitochondrion, to their mature size. While most mitochondrial precursor proteins are processed to the mature form in one step by mitochondrial processing peptidase (MPP), the sequential cleavage by MIP of an octapeptide after initial processing by MPP is a required step for a subgroup of nuclear-encoded precursor proteins destined for the matrix or the inner membrane. This chain is Mitochondrial intermediate peptidase (oct1), found in Aspergillus niger (strain ATCC MYA-4892 / CBS 513.88 / FGSC A1513).